A 141-amino-acid chain; its full sequence is Ubiquitin-like protein ATG12 (141 aa).

The tract at residues 24–54 (LELSPETAIPEPPSSVAVSPGTEEPPGDTKK) is disordered. A Glycyl lysine isopeptide (Gly-Lys) (interchain with K-? in acceptor protein) cross-link involves residue glycine 141.

The protein belongs to the ATG12 family. Forms a conjugate with ATG5. Part of the minor complex composed of 4 sets of ATG12-ATG5 and ATG16L1 (400 kDa); this complex interacts with ATG3 leading to disruption of ATG7 interaction and promotion of ATG8-like proteins lipidation. Forms an 800-kDa complex composed of ATG12-ATG5 and ATG16L2. Interacts with DHX58/RIG-1, IFIH1/MDA5 and MAVS/IPS-1 in monomeric form as well as in ATG12-ATG5 conjugate. The interaction with MAVS is further enhanced upon vesicular stomatitis virus (VSV) infection. Interacts with ATG3; this interaction is essential for phosphatidylethanolamine (PE)-conjugated ATG8-like proteins formation. Interacts with ATG7. Interacts with ATG10. The ATG12-ATG5 conjugate interacts with RAB33A; this interaction is bridged by ATG16L1 and promotes ATG12-ATG5-ATG16L1 complex recruitment to phagophores. Interacts with TECPR1. Interacts with SH3BGRL. The ATG12-ATG5 conjugate interacts with PDCD6IP (via the BRO1 domain); this interaction is bridged by ATG12 and promotes multiple PDCD6IP-mediated functions such as endolysosomal trafficking, macroautophagy and exosome biogenesis. In terms of processing, acetylated by EP300.

The protein resides in the cytoplasm. The protein localises to the preautophagosomal structure membrane. In terms of biological role, ubiquitin-like protein involved in autophagy vesicles formation. Conjugation with ATG5 through a ubiquitin-like conjugating system involving also ATG7 as an E1-like activating enzyme and ATG10 as an E2-like conjugating enzyme, is essential for its function. The ATG12-ATG5 conjugate acts as an E3-like enzyme which is required for lipidation of ATG8 family proteins and their association to the vesicle membranes. The ATG12-ATG5 conjugate also negatively regulates the innate antiviral immune response by blocking the type I IFN production pathway through direct association with RARRES3 and MAVS. Also plays a role in translation or delivery of incoming viral RNA to the translation apparatus. As part of the ATG8 conjugation system with ATG5 and ATG16L1, required for recruitment of LRRK2 to stressed lysosomes and induction of LRRK2 kinase activity in response to lysosomal stress. The protein is Ubiquitin-like protein ATG12 of Rattus norvegicus (Rat).